The following is a 128-amino-acid chain: Sulfurtransferase TusD (128 aa).

The Cysteine persulfide intermediate role is filled by C78.

The protein belongs to the DsrE/TusD family. As to quaternary structure, heterohexamer, formed by a dimer of trimers. The hexameric TusBCD complex contains 2 copies each of TusB, TusC and TusD. The TusBCD complex interacts with TusE.

Its subcellular location is the cytoplasm. Functionally, part of a sulfur-relay system required for 2-thiolation of 5-methylaminomethyl-2-thiouridine (mnm(5)s(2)U) at tRNA wobble positions. Accepts sulfur from TusA and transfers it in turn to TusE. The protein is Sulfurtransferase TusD of Shigella boydii serotype 18 (strain CDC 3083-94 / BS512).